A 171-amino-acid polypeptide reads, in one-letter code: CASP-like protein 5A2 (171 aa).

At 1 to 39 (MDGSAHLRDPPGPAVLRWRLEDMHIIPGTSGSLALRICQ) the chain is on the cytoplasmic side. Residues 40-60 (FSAAIVSFSVMISAANFSSVT) form a helical membrane-spanning segment. Position 61 (Ala61) is a topological domain, extracellular. The helical transmembrane segment at 62-82 (FCFLVAAMVLQCMWSLSVATI) threads the bilayer. The Cytoplasmic segment spans residues 83–106 (EGYAMLVGRSLRDSPLLSLFAVGD). Residues 107–127 (WVTAVITFAGACASAGIAVLV) traverse the membrane as a helical segment. At 128-148 (GRDIHRGCDVNFCGRYAAAAG) the chain is on the extracellular side. The helical transmembrane segment at 149–169 (MAFLSWLLISTSFLFTFWLLA) threads the bilayer. Over 170-171 (TR) the chain is Cytoplasmic.

The protein belongs to the Casparian strip membrane proteins (CASP) family. In terms of assembly, homodimer and heterodimers.

The protein resides in the cell membrane. This chain is CASP-like protein 5A2, found in Pteridium aquilinum subsp. aquilinum (Bracken fern).